A 268-amino-acid chain; its full sequence is Interleukin-1 beta (268 aa).

A propeptide spanning residues 1-115 is cleaved from the precursor; it reads MAAVPDTSDM…DNWDEGYVCD (115 aa).

It belongs to the IL-1 family. As to quaternary structure, monomer. In its precursor form, weakly interacts with full-length MEFV; the mature cytokine does not interact at all. Interacts with integrins ITGAV:ITGBV and ITGA5:ITGB1; integrin-binding is required for IL1B signaling. Interacts with cargo receptor TMED10; the interaction is direct and is required for the secretion of IL1B mature form. Interacts with HSP90AB1; the interaction facilitates cargo translocation into the ERGIC. Interacts with HSP90B1; the interaction facilitates cargo translocation into the ERGIC.

The protein localises to the cytoplasm. It localises to the cytosol. Its subcellular location is the secreted. The protein resides in the lysosome. It is found in the extracellular exosome. Its function is as follows. Potent pro-inflammatory cytokine. Initially discovered as the major endogenous pyrogen, induces prostaglandin synthesis, neutrophil influx and activation, T-cell activation and cytokine production, B-cell activation and antibody production, and fibroblast proliferation and collagen production. Promotes Th17 differentiation of T-cells. Synergizes with IL12/interleukin-12 to induce IFNG synthesis from T-helper 1 (Th1) cells. Plays a role in angiogenesis by inducing VEGF production synergistically with TNF and IL6. Involved in transduction of inflammation downstream of pyroptosis: its mature form is specifically released in the extracellular milieu by passing through the gasdermin-D (GSDMD) pore. The protein is Interleukin-1 beta (IL1B) of Equus caballus (Horse).